Reading from the N-terminus, the 698-residue chain is MCNTKCYNTLAKMTVITEPAMEYMYSVPLDESEYDKCGFCQDPRYRPRRHKDQHLARAGSAKAKELCEALIGVYPRPTCESAVGHSIALVMPECMPGRVEAMGEFMESIFYMDNIAESGSQQDTGNLGTEWANDMETGPTTSVNSNTGAKQVMAKLALQLLSIDPVCAGNVMKAWKEWAAGFAKPRRFDSIEQYIDYRLVDSGAIVAVHLMNFGMGLDISVEELREVSDIVNHAGKALSYQNDFFSFNYEHDMFVKLPDSIGIANAVFVLAETEGLSLAEAKERVKELAKEHEDAVLRLKDEVESKVSYKLRICLEGLVDMVVGNLVWSASCDRYSSYRREKHQMELPIRIQGPPTPPQEPVYEKATLPNGKQLDAPTESSGKDLSDGVATLSGDEPVLGDEIVSAPIKYLESLPSKGFREAIIDGMNGWLNLPARSVSIIKDVVKHIHTASLLCDDIEDSSPLRRGQPSAHIIFGVSQTVNSTSYLWTLAIDRLSELSSPKSLRIFIDEVRKMQIGQSFDLHWTAALQCPSEEEYLSMIDMKTGGLFHLLIRLMIAESPRKVDMDFSGLVSMTGRYFQIRDDLSNLTSEEYENQKGYCEDLDEGKYSLPLIHALKHTKNKVQLESLLIQRKTQGGMTLEMKRLAIQIMKEAGSLEHTRKVVLELQDAVHRELAKLEEAFGQENYVIQLALERLRIKA.

The terpene cyclase stretch occupies residues 21 to 340; sequence MEYMYSVPLD…SCDRYSSYRR (320 aa). D113 is a Mg(2+) binding site. The DDXXD 1 motif lies at 113 to 117; it reads DNIAE. The short motif at 242–250 is the NSE/DTE element; sequence NDFFSFNYE. The tract at residues 341 to 696 is prenyltransferase; that stretch reads EKHQMELPIR…IQLALERLRI (356 aa). Residues 368 to 387 form a disordered region; the sequence is LPNGKQLDAPTESSGKDLSD. Isopentenyl diphosphate is bound by residues K417, R420, and H449. Positions 456 and 460 each coordinate Mg(2+). Residues 456 to 460 carry the DDXXD 2 motif; the sequence is DDIED. Residue R465 participates in dimethylallyl diphosphate binding. Isopentenyl diphosphate is bound at residue R466. Dimethylallyl diphosphate-binding residues include K543, T544, Q579, N586, K596, and K606.

In the N-terminal section; belongs to the terpene synthase family. This sequence in the C-terminal section; belongs to the FPP/GGPP synthase family. In terms of assembly, hexamer. It depends on Mg(2+) as a cofactor.

The enzyme catalyses 5 isopentenyl diphosphate + dimethylallyl diphosphate = all-trans-hexaprenyl diphosphate + 5 diphosphate. It catalyses the reaction all-trans-hexaprenyl diphosphate = macrophomene + diphosphate. Its function is as follows. Bifunctional terpene synthase that converts dimethylallyl diphosphate (DMAPP) and isopentenyl diphosphate (IPP) into macrophomene as a single product. The C-terminal prenyltransferase (PT) domain of MpMS catalyzes formation of hexaprenyl diphosphate (HexPP), whereas the N-terminal terpene cyclase (TC) domain catalyzes the cyclization of HexPP to macrophomene. This Macrophomina phaseolina (strain MS6) (Charcoal rot fungus) protein is Macrophomene synthase.